We begin with the raw amino-acid sequence, 325 residues long: N-acetyl-gamma-glutamyl-phosphate reductase (325 aa).

Residue C135 is part of the active site.

Belongs to the NAGSA dehydrogenase family. Type 1 subfamily.

Its subcellular location is the cytoplasm. It carries out the reaction N-acetyl-L-glutamate 5-semialdehyde + phosphate + NADP(+) = N-acetyl-L-glutamyl 5-phosphate + NADPH + H(+). It participates in amino-acid biosynthesis; L-arginine biosynthesis; N(2)-acetyl-L-ornithine from L-glutamate: step 3/4. In terms of biological role, catalyzes the NADPH-dependent reduction of N-acetyl-5-glutamyl phosphate to yield N-acetyl-L-glutamate 5-semialdehyde. The sequence is that of N-acetyl-gamma-glutamyl-phosphate reductase from Karelsulcia muelleri (strain GWSS) (Sulcia muelleri).